The sequence spans 358 residues: Phospho-N-acetylmuramoyl-pentapeptide-transferase (358 aa).

10 consecutive transmembrane segments (helical) span residues 24 to 44 (FRSI…GPWV), 73 to 93 (TMGG…WADL), 95 to 115 (NVFI…GFVD), 134 to 154 (MFWQ…LPGF), 169 to 189 (ELGI…SNAV), 197 to 217 (GLAI…CYIA), 233 to 253 (GAGE…GFLW), 261 to 281 (VFMG…LAVL), 286 to 306 (ILLV…IFQV), and 335 to 355 (KIIV…ISTL).

It belongs to the glycosyltransferase 4 family. MraY subfamily. Requires Mg(2+) as cofactor.

Its subcellular location is the cell inner membrane. It catalyses the reaction UDP-N-acetyl-alpha-D-muramoyl-L-alanyl-gamma-D-glutamyl-meso-2,6-diaminopimeloyl-D-alanyl-D-alanine + di-trans,octa-cis-undecaprenyl phosphate = di-trans,octa-cis-undecaprenyl diphospho-N-acetyl-alpha-D-muramoyl-L-alanyl-D-glutamyl-meso-2,6-diaminopimeloyl-D-alanyl-D-alanine + UMP. The protein operates within cell wall biogenesis; peptidoglycan biosynthesis. Catalyzes the initial step of the lipid cycle reactions in the biosynthesis of the cell wall peptidoglycan: transfers peptidoglycan precursor phospho-MurNAc-pentapeptide from UDP-MurNAc-pentapeptide onto the lipid carrier undecaprenyl phosphate, yielding undecaprenyl-pyrophosphoryl-MurNAc-pentapeptide, known as lipid I. The sequence is that of Phospho-N-acetylmuramoyl-pentapeptide-transferase from Geobacter sp. (strain M21).